Reading from the N-terminus, the 601-residue chain is MNTMTDAAHLAADPRYDAAREIRAPRGTELHCKSWLTEAAYRMLQNNLDPDVAENPKHLVVYGGIGRAARDWACFDKILETLRELNDDESLLVQSGKPVGVFKTHPDAPRVLIANSNLVPKWANWEHFNALDRKGLFMYGQMTAGSWIYIGSQGIVQGTYETFAEAGRQHYSDRPSALLKQGLSPEGTAPGSGRSSAQVPGSHLAGRWILTAGLGGMGGAQPLAATLAGAVSLTIECQQSSIDFRLRTRYLDKQARDIDDALNLIRHHCERGEAVSIGLLGNAAELLPELVRRARAGGLKPDLVTDQTSAHDLVNGYLPAGWTVEQWRAAQRDPAQHAHLSAEAARSCAVHVQAMLDFQSMGIPTVDYGNNIRQVAFDQGVKNAFDFPGFVPAYIRPLFCEGRGPFRWVALSGDPEDIYKTDAKIKELFPHNAHVHRWLDMARERIAFQGLPARICWLGLGERHAAGLAFNEMVRKGELKAPIVIGRDHLDTGSVASPNRETEAMRDGTDAVSDWPLLNALLNTAGGATWVSLHHGGGVGMGYSQHAGVVIVADGTDAAARRLARVLVNDAGSGVMRHADAGYETAVACAKRNGLKLPMIG.

Residues 63 to 64 (GG) and Q141 contribute to the NAD(+) site. The segment at 172–201 (SDRPSALLKQGLSPEGTAPGSGRSSAQVPG) is insert. The disordered stretch occupies residues 179–200 (LKQGLSPEGTAPGSGRSSAQVP). Residues 216–218 (GMG), E236, 282–283 (NA), 307–311 (QTSAH), 317–318 (YL), and Y368 contribute to the NAD(+) site. C456 is an active-site residue. Position 538 (G538) interacts with NAD(+).

It belongs to the urocanase family. The cofactor is NAD(+).

It is found in the cytoplasm. It catalyses the reaction 4-imidazolone-5-propanoate = trans-urocanate + H2O. It functions in the pathway amino-acid degradation; L-histidine degradation into L-glutamate; N-formimidoyl-L-glutamate from L-histidine: step 2/3. In terms of biological role, catalyzes the conversion of urocanate to 4-imidazolone-5-propionate. The polypeptide is Urocanate hydratase (Ralstonia nicotianae (strain ATCC BAA-1114 / GMI1000) (Ralstonia solanacearum)).